A 244-amino-acid polypeptide reads, in one-letter code: Probable ABC transporter ATP-binding protein p29 (244 aa).

The region spanning 6-241 (LVFDQVSLRY…KLTKQKLMQI (236 aa)) is the ABC transporter domain. 38–45 (GKSGVGKT) is an ATP binding site.

This sequence belongs to the ABC transporter superfamily.

Its function is as follows. Part of a high-affinity transport system. In Mycoplasma pneumoniae (strain ATCC 29342 / M129 / Subtype 1) (Mycoplasmoides pneumoniae), this protein is Probable ABC transporter ATP-binding protein p29 (p29).